We begin with the raw amino-acid sequence, 430 residues long: FAD-dependent monooxygenase asL4 (430 aa).

Residues 11 to 14 (GGIA), 33 to 34 (ER), Arg108, and Tyr278 contribute to the FAD site.

It belongs to the aromatic-ring hydroxylase family. The cofactor is FAD.

It functions in the pathway secondary metabolite biosynthesis; terpenoid biosynthesis. Functionally, flavin-dependent monooxygenase; part of the gene cluster that mediates the biosynthesis of xenovulene A, an unusual meroterpenoid that has potent inhibitory effects on the human gamma-aminobutyrate A (GABAA) benzodiazepine receptor. The first step of xenovulene A biosynthesis is the biosynthesis of 3-methylorcinaldehyde performed by the non-reducing polyketide synthase aspks1. The salicylate hydroxylase asL1 then catalyzes the oxidative dearomatization of 3-methylorcinaldehyde to yield a dearomatized hydroxycyclohexadione. The 2-oxoglutarate-dependent dioxygenase asL3 further catalyzes the oxidative ring expansion to provide the first tropolone metabolite. The cytochrome P450 monooxygenase asR2 allows the synthesis of tropolone hemiacetal. In parallel, a previously unrecognised class of terpene cyclase, asR6, produces alpha-humulene from farnesylpyrophosphate (FPP). The putative Diels-Alderase asR5 probably catalyzes the formation of the tropolone-humulene skeleton by linking humulene and the polyketide moiety. Oxidative-ring contractions catalyzed by asL4 and asL6 then processively remove carbon atoms from the polyketide to yield xenovulene A. This chain is FAD-dependent monooxygenase asL4, found in Sarocladium schorii (Acremonium strictum (strain IMI 501407)).